Consider the following 267-residue polypeptide: tRNA pseudouridine synthase A (267 aa).

The Nucleophile role is filled by Asp-55. Tyr-109 provides a ligand contact to substrate.

The protein belongs to the tRNA pseudouridine synthase TruA family.

It catalyses the reaction uridine(38/39/40) in tRNA = pseudouridine(38/39/40) in tRNA. Its function is as follows. Formation of pseudouridine at positions 38, 39 and 40 in the anticodon stem and loop of transfer RNAs. The chain is tRNA pseudouridine synthase A from Natronomonas pharaonis (strain ATCC 35678 / DSM 2160 / CIP 103997 / JCM 8858 / NBRC 14720 / NCIMB 2260 / Gabara) (Halobacterium pharaonis).